An 81-amino-acid polypeptide reads, in one-letter code: RNA-binding protein Hfq (81 aa).

Residues 10–70 (DLFLNSVRKS…ISTIMPSQPV (61 aa)) enclose the Sm domain.

The protein belongs to the Hfq family. In terms of assembly, homohexamer.

In terms of biological role, RNA chaperone that binds small regulatory RNA (sRNAs) and mRNAs to facilitate mRNA translational regulation in response to envelope stress, environmental stress and changes in metabolite concentrations. Also binds with high specificity to tRNAs. This chain is RNA-binding protein Hfq, found in Mesorhizobium japonicum (strain LMG 29417 / CECT 9101 / MAFF 303099) (Mesorhizobium loti (strain MAFF 303099)).